A 229-amino-acid polypeptide reads, in one-letter code: ATP-dependent Clp protease proteolytic subunit 1 (229 aa).

S129 (nucleophile) is an active-site residue. Residue H154 is part of the active site.

This sequence belongs to the peptidase S14 family. Fourteen ClpP subunits assemble into 2 heptameric rings which stack back to back to give a disk-like structure with a central cavity, resembling the structure of eukaryotic proteasomes.

The protein localises to the cytoplasm. The enzyme catalyses Hydrolysis of proteins to small peptides in the presence of ATP and magnesium. alpha-casein is the usual test substrate. In the absence of ATP, only oligopeptides shorter than five residues are hydrolyzed (such as succinyl-Leu-Tyr-|-NHMec, and Leu-Tyr-Leu-|-Tyr-Trp, in which cleavage of the -Tyr-|-Leu- and -Tyr-|-Trp bonds also occurs).. Functionally, cleaves peptides in various proteins in a process that requires ATP hydrolysis. Has a chymotrypsin-like activity. Plays a major role in the degradation of misfolded proteins. The chain is ATP-dependent Clp protease proteolytic subunit 1 from Thermosynechococcus vestitus (strain NIES-2133 / IAM M-273 / BP-1).